A 165-amino-acid chain; its full sequence is uncharacterized protein (165 aa).

A signal peptide spans 1–25 (MKRVLFSVIVFTAVGFTFCQSKAHA).

This is an uncharacterized protein from Bacillus subtilis (strain 168).